The sequence spans 206 residues: Fibroblast growth factor 4 (206 aa).

Positions 1 to 29 are cleaved as a signal peptide; the sequence is MAGPGTAAAALLPAVLLAVLAPWAGRGGA.

This sequence belongs to the heparin-binding growth factors family. In terms of assembly, interacts with FGFR1, FGFR2, FGFR3 and FGFR4. Affinity between fibroblast growth factors (FGFs) and their receptors is increased by heparan sulfate glycosaminoglycans that function as coreceptors.

The protein resides in the secreted. Its function is as follows. Plays an important role in the regulation of embryonic development, cell proliferation, and cell differentiation. Required for normal limb and cardiac valve development during embryogenesis. May play a role in embryonic molar tooth bud development via inducing the expression of MSX1, MSX2 and MSX1-mediated expression of SDC1 in dental mesenchyme cells. The chain is Fibroblast growth factor 4 from Bos taurus (Bovine).